We begin with the raw amino-acid sequence, 385 residues long: Deoxyguanosinetriphosphate triphosphohydrolase-like protein (385 aa).

Residues 75–197 (RLTHTLEVGQ…VDAADALAYT (123 aa)) enclose the HD domain.

It belongs to the dGTPase family. Type 2 subfamily.

This Deinococcus geothermalis (strain DSM 11300 / CIP 105573 / AG-3a) protein is Deoxyguanosinetriphosphate triphosphohydrolase-like protein.